The primary structure comprises 165 residues: NADH-quinone oxidoreductase subunit I (165 aa).

2 consecutive 4Fe-4S ferredoxin-type domains span residues 57-86 (RRYE…IESD) and 96-125 (SRYD…ETHI). C66, C69, C72, C76, C105, C108, C111, and C115 together coordinate [4Fe-4S] cluster.

It belongs to the complex I 23 kDa subunit family. NDH-1 is composed of 14 different subunits. Subunits NuoA, H, J, K, L, M, N constitute the membrane sector of the complex. [4Fe-4S] cluster serves as cofactor.

The protein resides in the cell inner membrane. It catalyses the reaction a quinone + NADH + 5 H(+)(in) = a quinol + NAD(+) + 4 H(+)(out). Functionally, NDH-1 shuttles electrons from NADH, via FMN and iron-sulfur (Fe-S) centers, to quinones in the respiratory chain. The immediate electron acceptor for the enzyme in this species is believed to be ubiquinone. Couples the redox reaction to proton translocation (for every two electrons transferred, four hydrogen ions are translocated across the cytoplasmic membrane), and thus conserves the redox energy in a proton gradient. The protein is NADH-quinone oxidoreductase subunit I of Polaromonas naphthalenivorans (strain CJ2).